The primary structure comprises 577 residues: Mitochondrial-processing peptidase subunit alpha (577 aa).

A mitochondrion-targeting transit peptide spans 1–35 (MLNRFRPARLVAQSSRCLPLTRARAGPLPVNNART). The interval 259 to 301 (SDAPGLSRTGSETSVDSLVSESSEASSESSSSSSDSSESSGGL) is disordered. The segment covering 269-301 (SETSVDSLVSESSEASSESSSSSSDSSESSGGL) has biased composition (low complexity).

This sequence belongs to the peptidase M16 family. In terms of assembly, heterodimer of mpp (alpha) and pep (beta) subunits, forming the mitochondrial processing protease (MPP) in which mpp is involved in substrate recognition and binding and pep is the catalytic subunit.

It localises to the mitochondrion matrix. In terms of biological role, substrate recognition and binding subunit of the essential mitochondrial processing protease (MPP), which cleaves the mitochondrial sequence off newly imported precursors proteins. The sequence is that of Mitochondrial-processing peptidase subunit alpha from Neurospora crassa (strain ATCC 24698 / 74-OR23-1A / CBS 708.71 / DSM 1257 / FGSC 987).